Here is a 383-residue protein sequence, read N- to C-terminus: Fructose-1,6-bisphosphate aldolase/phosphatase (383 aa).

Catalysis depends on aspartate 11, which acts as the Proton acceptor; for FBP phosphatase activity. Mg(2+) contacts are provided by aspartate 11, histidine 18, aspartate 52, and aspartate 53. Histidine 18 contacts beta-D-fructose 1,6-bisphosphate. Histidine 18 is a dihydroxyacetone phosphate binding site. Tyrosine 90 is a beta-D-fructose 1,6-bisphosphate binding site. Residue glutamine 94 coordinates Mg(2+). 103–104 is a binding site for beta-D-fructose 1,6-bisphosphate; that stretch reads GN. Residue aspartate 131 coordinates Mg(2+). Position 132 (lysine 132) interacts with beta-D-fructose 1,6-bisphosphate. Lysine 132 is a dihydroxyacetone phosphate binding site. The active-site Proton donor/acceptor; for FBP aldolase activity is tyrosine 228. Mg(2+)-binding residues include lysine 231, aspartate 232, and aspartate 233. Lysine 231 (schiff-base intermediate with DHAP; for FBP aldolase activity) is an active-site residue. Residues 241–242, arginine 265, aspartate 286, and tyrosine 347 contribute to the beta-D-fructose 1,6-bisphosphate site; that span reads QH. 2 residues coordinate dihydroxyacetone phosphate: arginine 265 and aspartate 286. The interval 361–383 is disordered; that stretch reads FKKEEDVKKAKPSVYTSKDQGMD. The span at 374 to 383 shows a compositional bias: polar residues; the sequence is VYTSKDQGMD.

It belongs to the FBP aldolase/phosphatase family. In terms of assembly, homooctamer; dimer of tetramers. The cofactor is Mg(2+).

It catalyses the reaction beta-D-fructose 1,6-bisphosphate + H2O = beta-D-fructose 6-phosphate + phosphate. The enzyme catalyses beta-D-fructose 1,6-bisphosphate = D-glyceraldehyde 3-phosphate + dihydroxyacetone phosphate. Its pathway is carbohydrate biosynthesis; gluconeogenesis. Its function is as follows. Catalyzes two subsequent steps in gluconeogenesis: the aldol condensation of dihydroxyacetone phosphate (DHAP) and glyceraldehyde-3-phosphate (GA3P) to fructose-1,6-bisphosphate (FBP), and the dephosphorylation of FBP to fructose-6-phosphate (F6P). The protein is Fructose-1,6-bisphosphate aldolase/phosphatase of Metallosphaera sedula (strain ATCC 51363 / DSM 5348 / JCM 9185 / NBRC 15509 / TH2).